We begin with the raw amino-acid sequence, 501 residues long: Ectoine/hydroxyectoine transporter (501 aa).

The next 12 helical transmembrane spans lie at 9 to 29 (PVFY…ATLP), 45 to 65 (IHFG…LITL), 86 to 106 (FFTW…VFWG), 137 to 157 (AFFH…LVIA), 190 to 210 (LAVI…ILQM), 220 to 240 (VPTS…TYLI), 258 to 278 (LGSL…VFIL), 311 to 331 (WTIF…AFIA), 343 to 363 (VLGV…AFGG), 395 to 415 (LPMT…FLVT), 441 to 461 (IVWG…GGLE), and 465 to 485 (TASL…MASF).

It belongs to the BCCT transporter (TC 2.A.15) family.

The protein resides in the cell inner membrane. Functionally, mediates the import of ectoine and hydroxyectoine, which function as osmotic and cold stress protectants. Also has minor uptake activities for the compatible solutes proline and glycine betaine. This Virgibacillus pantothenticus protein is Ectoine/hydroxyectoine transporter.